The primary structure comprises 409 residues: Putative competence-damage inducible protein (409 aa).

It belongs to the CinA family.

This Clostridium botulinum (strain Kyoto / Type A2) protein is Putative competence-damage inducible protein.